The sequence spans 567 residues: Inactive protein kinase SELMODRAFT_444075 (567 aa).

A disordered region spans residues 148 to 206 (NETRRKGPSPSEVLNSTTSSPASHKPQVLNDFLRMKESREYTEETDTQRNVSRPVDRVS). Residues 159–169 (EVLNSTTSSPA) are compositionally biased toward polar residues. Basic and acidic residues predominate over residues 180–189 (LRMKESREYT). Over residues 196–206 (RNVSRPVDRVS) the composition is skewed to low complexity. Positions 255 to 487 (FSDVNFLAEG…EGDSLSDTSL (233 aa)) constitute a Protein kinase domain. ATP is bound by residues 261 to 269 (LAEGGYGSV) and lysine 283. Over residues 511–538 (DSSSSRSSSASSVLKSFSRTQHSSRSSS) the composition is skewed to low complexity. Residues 511–567 (DSSSSRSSSASSVLKSFSRTQHSSRSSSNAGSPLNPAATQALAFKKYNKNTTRHTQD) are disordered. The segment covering 556–567 (KYNKNTTRHTQD) has biased composition (basic residues).

This Selaginella moellendorffii (Spikemoss) protein is Inactive protein kinase SELMODRAFT_444075.